Reading from the N-terminus, the 379-residue chain is Omega-3 fatty acid desaturase, endoplasmic reticulum (379 aa).

The chain crosses the membrane as a helical span at residues 52-72; it reads LSYVVRDVIFVATLIGIAIHL. Positions 97–101 match the Histidine box-1 motif; that stretch reads HDCGH. Positions 133–137 match the Histidine box-2 motif; that stretch reads HKTHH. The next 2 helical transmembrane spans lie at 213–233 and 236–256; these read TLCWTVMAALLLYLCTAFGSL and FKIYGAPYLIFVMWLDFVTYL. Residues 300–304 carry the Histidine box-3 motif; it reads HVIHH.

It belongs to the fatty acid desaturase type 1 family.

The protein localises to the endoplasmic reticulum membrane. Its pathway is lipid metabolism; polyunsaturated fatty acid biosynthesis. ER (microsomal) omega-3 fatty acid desaturase introduces the third double bond in the biosynthesis of 18:3 fatty acids, important constituents of plant membranes. It is thought to use cytochrome b5 as an electron donor and to act on fatty acids esterified to phosphatidylcholine and, possibly, other phospholipids. The polypeptide is Omega-3 fatty acid desaturase, endoplasmic reticulum (FAD3) (Nicotiana tabacum (Common tobacco)).